Consider the following 811-residue polypeptide: Protein kinase C-binding protein NELL2a (811 aa).

Residues 1–18 form the signal peptide; sequence MAFLQLFVGLLCGAAVSA. Positions 54 to 225 constitute a Laminin G-like domain; sequence AFMFQGSSRS…TQCPDLNRTC (172 aa). N-linked (GlcNAc...) asparagine glycosylation is found at Asn222, Asn290, and Asn295. Residues 269–328 enclose the VWFC 1 domain; that stretch reads RTCRVKDQIYREEQSWTDGCKNCTCSNGTVRCEKILCPPLDCPDGTTPAYVTGTCCKECQ. The EGF-like 1 domain occupies 395–437; the sequence is GHDFCAEENICSENSDCVNLDAGASCGCKNGFRPLRLDSAYCE. Disulfide bonds link Cys399–Cys411, Cys405–Cys420, and Cys422–Cys436. Ca(2+) is bound by residues Asp438, Ile439, and Glu441. The EGF-like 2; calcium-binding domain occupies 438 to 479; sequence DIDECAEGRHYCRENTECVNTAGSFMCVCHTGFIRIDDYSCT. Intrachain disulfides connect Cys442/Cys455, Cys449/Cys464, Cys466/Cys478, Cys484/Cys497, Cys491/Cys506, Cys508/Cys519, Cys523/Cys533, Cys527/Cys539, and Cys541/Cys550. Residues Asn457, Thr458, and Ser461 each contribute to the Ca(2+) site. The region spanning 480-520 is the EGF-like 3; calcium-binding domain; that stretch reads EHDECASGQHDCDENALCFNTVGGHSCSCKPGYSGNGTVCR. Residue Asn515 is glycosylated (N-linked (GlcNAc...) asparagine). In terms of domain architecture, EGF-like 4 spans 521–551; sequence ALCDGRCLNGGSCASPNVCVCVQGFSGQNCE. Ca(2+)-binding residues include Asp553, Ile554, and Glu556. One can recognise an EGF-like 5; calcium-binding domain in the interval 553–592; sequence DIDECSEGLVQCAAHATCVNLPGWYHCECRDGYHDNEVFS. Intrachain disulfides connect Cys557–Cys570, Cys564–Cys579, and Cys581–Cys598. Residues Asn572, Leu573, and Trp576 each coordinate Ca(2+). Ca(2+)-binding residues include Asp600, Ile601, and Glu603. In terms of domain architecture, EGF-like 6; calcium-binding spans 600–635; sequence DIDECRTGRSTCANDTVCFNLDGGFDCRCPHGHNCS. 3 disulfides stabilise this stretch: Cys604–Cys617, Cys611–Cys626, and Cys628–Cys634. N-linked (GlcNAc...) asparagine glycosylation is present at Asn613. Residues Asn619, Leu620, and Gly623 each coordinate Ca(2+). An N-linked (GlcNAc...) asparagine glycan is attached at Asn633. VWFC domains lie at 636–691 and 696–754; these read GDCI…PECD and SQCL…PRCV.

In terms of assembly, homotrimer.

The protein resides in the secreted. May regulate neuronal differentiation, polarization and axon guidance. This chain is Protein kinase C-binding protein NELL2a (nell2a), found in Danio rerio (Zebrafish).